The following is a 388-amino-acid chain: Succinate--CoA ligase [ADP-forming] subunit beta (388 aa).

One can recognise an ATP-grasp domain in the interval 9–244 (KQLFAEFGLP…PSQEDEREAH (236 aa)). Residues K46, 53-55 (GRG), E99, S102, and E107 each bind ATP. Mg(2+) contacts are provided by N199 and D213. Residues N264 and 321-323 (GIV) contribute to the substrate site.

Belongs to the succinate/malate CoA ligase beta subunit family. In terms of assembly, heterotetramer of two alpha and two beta subunits. It depends on Mg(2+) as a cofactor.

The catalysed reaction is succinate + ATP + CoA = succinyl-CoA + ADP + phosphate. It carries out the reaction GTP + succinate + CoA = succinyl-CoA + GDP + phosphate. It participates in carbohydrate metabolism; tricarboxylic acid cycle; succinate from succinyl-CoA (ligase route): step 1/1. Functionally, succinyl-CoA synthetase functions in the citric acid cycle (TCA), coupling the hydrolysis of succinyl-CoA to the synthesis of either ATP or GTP and thus represents the only step of substrate-level phosphorylation in the TCA. The beta subunit provides nucleotide specificity of the enzyme and binds the substrate succinate, while the binding sites for coenzyme A and phosphate are found in the alpha subunit. This Aliivibrio fischeri (strain ATCC 700601 / ES114) (Vibrio fischeri) protein is Succinate--CoA ligase [ADP-forming] subunit beta.